Here is a 370-residue protein sequence, read N- to C-terminus: Flagellar P-ring protein (370 aa).

The N-terminal stretch at 1 to 21 (MKYILIKLSIVMIFIINSASK) is a signal peptide.

This sequence belongs to the FlgI family. As to quaternary structure, the basal body constitutes a major portion of the flagellar organelle and consists of four rings (L,P,S, and M) mounted on a central rod.

It localises to the bacterial flagellum basal body. Its function is as follows. Assembles around the rod to form the L-ring and probably protects the motor/basal body from shearing forces during rotation. The sequence is that of Flagellar P-ring protein from Wigglesworthia glossinidia brevipalpis.